Here is a 151-residue protein sequence, read N- to C-terminus: Small ribosomal subunit protein uS13 (151 aa).

It belongs to the universal ribosomal protein uS13 family. As to quaternary structure, part of the 30S ribosomal subunit. Forms a loose heterodimer with protein S19. Forms two bridges to the 50S subunit in the 70S ribosome.

Its function is as follows. Located at the top of the head of the 30S subunit, it contacts several helices of the 16S rRNA. In the 70S ribosome it contacts the 23S rRNA (bridge B1a) and protein L5 of the 50S subunit (bridge B1b), connecting the 2 subunits; these bridges are implicated in subunit movement. This chain is Small ribosomal subunit protein uS13, found in Methanospirillum hungatei JF-1 (strain ATCC 27890 / DSM 864 / NBRC 100397 / JF-1).